The sequence spans 375 residues: 23S rRNA (uracil(747)-C(5))-methyltransferase RlmC (375 aa).

[4Fe-4S] cluster-binding residues include cysteine 3, cysteine 11, cysteine 14, and cysteine 87. Residues glutamine 212, phenylalanine 241, glutamate 262, and asparagine 307 each contribute to the S-adenosyl-L-methionine site. Cysteine 334 serves as the catalytic Nucleophile.

The protein belongs to the class I-like SAM-binding methyltransferase superfamily. RNA M5U methyltransferase family. RlmC subfamily.

The enzyme catalyses uridine(747) in 23S rRNA + S-adenosyl-L-methionine = 5-methyluridine(747) in 23S rRNA + S-adenosyl-L-homocysteine + H(+). Catalyzes the formation of 5-methyl-uridine at position 747 (m5U747) in 23S rRNA. In Salmonella arizonae (strain ATCC BAA-731 / CDC346-86 / RSK2980), this protein is 23S rRNA (uracil(747)-C(5))-methyltransferase RlmC.